The sequence spans 206 residues: MSKTRRMVLIAMLAALSTILLLPILQFPLLPGIDFMKVELSIIPVLIGVFTLGLGDGFIILFIRSVLWYLLFNQGPSTWIGVPMNFVALGIFMAIVWFFTKKKFSIKNYTVGIVLATIASVLVMMVLNVFYALPLYRLAAGFDVDKIFAGATHLFNMGSLSVTLNPTYLLTVVLPFNALQYIIFALVFGLIVTVFKKNKVVKFYNA.

6 helical membrane passes run 7–27 (MVLIAMLAALSTILLLPILQF), 42–62 (IIPVLIGVFTLGLGDGFIILF), 79–99 (WIGVPMNFVALGIFMAIVWFF), 113–133 (IVLATIASVLVMMVLNVFYAL), 147–169 (IFAGATHLFNMGSLSVTLNPTYL), and 173–195 (VLPFNALQYIIFALVFGLIVTVF).

It belongs to the prokaryotic riboflavin transporter (P-RFT) (TC 2.A.87) family. As to quaternary structure, in E.coli forms a stable energy-coupling factor (ECF) transporter complex composed of 2 membrane-embedded substrate-binding protein (S component), 2 ATP-binding proteins (A and A' components) and 2 transmembrane proteins (T component), probably with a stoichiometry of 2:1:1:2. May be able to interact with more than 1 S component at a time.

It localises to the cell membrane. In terms of biological role, mediates riboflavin uptake, may also transport FMN and roseoflavin. Probably a riboflavin-binding protein that interacts with the energy-coupling factor (ECF) ABC-transporter complex. Unlike classic ABC transporters this ECF transporter provides the energy necessary to transport a number of different substrates. The substrates themselves are bound by transmembrane, not extracytoplasmic soluble proteins. Uptake of riboflavin into proteosomes containing EcfA1A2T and RibU has been demonstrated. Uptake requires hydrolyzable Mg-ATP. The protein is Riboflavin transporter RibU (ribU) of Lactococcus lactis subsp. cremoris (strain MG1363).